Reading from the N-terminus, the 557-residue chain is Arginine--tRNA ligase (557 aa).

The short motif at 132–142 (ANPTGNLHLGH) is the 'HIGH' region element.

This sequence belongs to the class-I aminoacyl-tRNA synthetase family. As to quaternary structure, monomer.

The protein resides in the cytoplasm. The enzyme catalyses tRNA(Arg) + L-arginine + ATP = L-arginyl-tRNA(Arg) + AMP + diphosphate. The protein is Arginine--tRNA ligase of Geobacillus thermodenitrificans (strain NG80-2).